Consider the following 730-residue polypeptide: Cyclin-dependent kinase 12 (730 aa).

Disordered regions lie at residues 1–230 (MEIS…APFS) and 246–283 (FSLS…IATR). A compositionally biased stretch (basic and acidic residues) spans 9 to 21 (THERDRKGSYGHR). The segment covering 57 to 67 (SISPQYKQRNW) has biased composition (polar residues). The span at 75-94 (GRDRGRNDFSYRKKGKDYNK) shows a compositional bias: basic and acidic residues. Composition is skewed to basic residues over residues 95-122 (RRDK…KRRN) and 151-163 (KSKK…RKHS). A compositionally biased stretch (low complexity) spans 194–203 (FNINPFQPMF). A compositionally biased stretch (pro residues) spans 204-230 (SQPPPPPLPPNSQFMTPPPRPPPAPFS). A Protein kinase domain is found at 313 to 605 (MLDQIGEGTY…AKEALNHPWI (293 aa)). Residues 317-325 (IGEGTYGQV), Lys-340, and 398-403 (EYVDHD) contribute to the ATP site. Asp-444 functions as the Proton acceptor in the catalytic mechanism. Residues 623 to 730 (DCHEMWSKKQ…QSQYQSVFFK (108 aa)) form a disordered region. His-625 is a binding site for ATP. Basic residues predominate over residues 676–688 (NHHHHHHHSHHHA). Polar residues predominate over residues 714–730 (NNHQPVPQSQYQSVFFK).

The protein belongs to the protein kinase superfamily. CMGC Ser/Thr protein kinase family. CDC2/CDKX subfamily.

Its subcellular location is the nucleus. The enzyme catalyses [DNA-directed RNA polymerase] + ATP = phospho-[DNA-directed RNA polymerase] + ADP + H(+). It catalyses the reaction L-seryl-[protein] + ATP = O-phospho-L-seryl-[protein] + ADP + H(+). It carries out the reaction L-threonyl-[protein] + ATP = O-phospho-L-threonyl-[protein] + ADP + H(+). Cyclin-dependent kinase which displays CTD kinase activity: hyperphosphorylates 'Ser-2' in the C-terminal heptapeptide repeat domain (CTD) of the largest RNA polymerase II subunit, thereby acting as a key regulator of transcription elongation. Required for normal reproduction. In Caenorhabditis elegans, this protein is Cyclin-dependent kinase 12.